Here is a 300-residue protein sequence, read N- to C-terminus: Glutamyl-Q tRNA(Asp) synthetase (300 aa).

L-glutamate contacts are provided by residues 14 to 18 (RFAPT) and E50. Positions 17 to 27 (PTPSGFLHFGS) match the 'HIGH' region motif. C106, C108, Y120, and C124 together coordinate Zn(2+). Positions 177 and 195 each coordinate L-glutamate. The 'KMSKS' region signature appears at 233–237 (KLGKS). K236 provides a ligand contact to ATP.

This sequence belongs to the class-I aminoacyl-tRNA synthetase family. GluQ subfamily. Zn(2+) is required as a cofactor.

Catalyzes the tRNA-independent activation of glutamate in presence of ATP and the subsequent transfer of glutamate onto a tRNA(Asp). Glutamate is transferred on the 2-amino-5-(4,5-dihydroxy-2-cyclopenten-1-yl) moiety of the queuosine in the wobble position of the QUC anticodon. The protein is Glutamyl-Q tRNA(Asp) synthetase of Pseudomonas putida (strain ATCC 47054 / DSM 6125 / CFBP 8728 / NCIMB 11950 / KT2440).